The chain runs to 141 residues: Galactose-6-phosphate isomerase subunit LacA (141 aa).

Belongs to the LacAB/RpiB family. Heteromultimeric protein consisting of LacA and LacB.

It carries out the reaction aldehydo-D-galactose 6-phosphate = keto-D-tagatose 6-phosphate. Its pathway is carbohydrate metabolism; D-galactose 6-phosphate degradation; D-tagatose 6-phosphate from D-galactose 6-phosphate: step 1/1. The protein is Galactose-6-phosphate isomerase subunit LacA of Streptococcus pneumoniae (strain P1031).